A 267-amino-acid polypeptide reads, in one-letter code: Auxin-responsive protein IAA18 (267 aa).

Positions 42 to 46 match the EAR-like (transcriptional repression) motif; the sequence is LELKL. The disordered stretch occupies residues 81–101; sequence PSSTKTTSHKRTAPGPVVGWP. The PB1 domain occupies 149 to 248; the sequence is GMFVKINMYG…SVKRLRVIKT (100 aa).

The protein belongs to the Aux/IAA family. As to quaternary structure, homodimers and heterodimers. Interacts with TPL.

The protein localises to the nucleus. Aux/IAA proteins are short-lived transcriptional factors that function as repressors of early auxin response genes at low auxin concentrations. Repression is thought to result from the interaction with auxin response factors (ARFs), proteins that bind to the auxin-responsive promoter element (AuxRE). Formation of heterodimers with ARF proteins may alter their ability to modulate early auxin response genes expression. In Arabidopsis thaliana (Mouse-ear cress), this protein is Auxin-responsive protein IAA18 (IAA18).